A 130-amino-acid polypeptide reads, in one-letter code: Acidic phospholipase A2 daboiatoxin B chain (130 aa).

Positions 1–8 are cleaved as a signal peptide; sequence MCLIGVEG. 7 disulfide bridges follow: cysteine 34-cysteine 123, cysteine 36-cysteine 52, cysteine 51-cysteine 103, cysteine 57-cysteine 130, cysteine 58-cysteine 96, cysteine 65-cysteine 89, and cysteine 83-cysteine 94. Residues tyrosine 35, glycine 37, and glycine 39 each contribute to the Ca(2+) site. The active site involves histidine 55. Aspartate 56 is a Ca(2+) binding site. Aspartate 97 is a catalytic residue.

Belongs to the phospholipase A2 family. Group II subfamily. D49 sub-subfamily. As to quaternary structure, heterodimer of an acidic protein having phospholipase A2 activity (B chain) and an A chain which weakly inhibits the B chain enzymatic activity but potentiates its lethal potency. Requires Ca(2+) as cofactor. In terms of tissue distribution, expressed by the venom gland.

The protein resides in the secreted. The enzyme catalyses a 1,2-diacyl-sn-glycero-3-phosphocholine + H2O = a 1-acyl-sn-glycero-3-phosphocholine + a fatty acid + H(+). Monomer: Snake venom phospholipase A2 (PLA2) that shows a high PLA2 activity (2110 umol/min/mg). Its function is as follows. Heterodimer (A and B chains): snake venom phospholipase A2 that shows a moderate PLA2 activity (1377 umol/min/mg). Acts as a presynaptic neurotoxin. In vivo, induces edema and produces neurotoxic symptoms in mice. It exhibits indirect hemolysis and a strong myonecrotic activity and is cytotoxic. PLA2 catalyzes the calcium-dependent hydrolysis of the 2-acyl groups in 3-sn-phosphoglycerides. This is Acidic phospholipase A2 daboiatoxin B chain from Daboia siamensis (Eastern Russel's viper).